Here is a 178-residue protein sequence, read N- to C-terminus: N-alpha-acetyltransferase 20 (178 aa).

An N-acetyltransferase domain is found at 2 to 157; it reads TSLRPFTCDD…DAYDMRKALS (156 aa). The tract at residues 159–178 is disordered; it reads DTEKKSIVPLPHPVRPEDIE.

Belongs to the acetyltransferase family. ARD1 subfamily. In terms of assembly, component of the N-terminal acetyltransferase B (NatB) complex which is composed of naa20 and naa25.

Its subcellular location is the cytoplasm. It localises to the nucleus. It carries out the reaction N-terminal L-methionyl-L-asparaginyl-[protein] + acetyl-CoA = N-terminal N(alpha)-acetyl-L-methionyl-L-asparaginyl-[protein] + CoA + H(+). It catalyses the reaction N-terminal L-methionyl-L-glutaminyl-[protein] + acetyl-CoA = N-terminal N(alpha)-acetyl-L-methionyl-L-glutaminyl-[protein] + CoA + H(+). The enzyme catalyses N-terminal L-methionyl-L-aspartyl-[protein] + acetyl-CoA = N-terminal N(alpha)-acetyl-L-methionyl-L-aspartyl-[protein] + CoA + H(+). The catalysed reaction is N-terminal L-methionyl-L-glutamyl-[protein] + acetyl-CoA = N-terminal N(alpha)-acetyl-L-methionyl-L-glutamyl-[protein] + CoA + H(+). In terms of biological role, catalytic subunit of the NatB complex which catalyzes acetylation of the N-terminal methionine residues of peptides beginning with Met-Asp, Met-Glu, Met-Asn and Met-Gln. Proteins with cell cycle functions are overrepresented in the pool of NatB substrates. Required for maintaining the structure and function of actomyosin fibers and for proper cellular migration. The protein is N-alpha-acetyltransferase 20 (naa20) of Xenopus tropicalis (Western clawed frog).